A 523-amino-acid chain; its full sequence is Probable FAD synthase (523 aa).

The interval 20–111 (AIVVIGDEIL…TDQLHFSDEI (92 aa)) is molybdenum cofactor biosynthesis protein-like. Residues 332–489 (QIALSFNGGK…SLGGRDNTVK (158 aa)) form an FAD synthase region.

In the N-terminal section; belongs to the MoaB/Mog family. It in the C-terminal section; belongs to the PAPS reductase family. FAD1 subfamily. Mg(2+) is required as a cofactor.

The enzyme catalyses FMN + ATP + H(+) = FAD + diphosphate. The protein operates within cofactor biosynthesis; FAD biosynthesis; FAD from FMN: step 1/1. Functionally, catalyzes the adenylation of flavin mononucleotide (FMN) to form flavin adenine dinucleotide (FAD) coenzyme. This chain is Probable FAD synthase, found in Caenorhabditis briggsae.